The chain runs to 870 residues: Probable inorganic carbon transporter subunit DabA (870 aa).

Zn(2+)-binding residues include cysteine 381, aspartate 383, histidine 564, and cysteine 579.

This sequence belongs to the inorganic carbon transporter (TC 9.A.2) DabA family. In terms of assembly, forms a complex with DabB. It depends on Zn(2+) as a cofactor.

The protein resides in the cell membrane. Functionally, part of an energy-coupled inorganic carbon pump. The chain is Probable inorganic carbon transporter subunit DabA from Geobacillus kaustophilus (strain HTA426).